The sequence spans 89 residues: Small ribosomal subunit protein uS15 (89 aa).

This sequence belongs to the universal ribosomal protein uS15 family. As to quaternary structure, part of the 30S ribosomal subunit. Forms a bridge to the 50S subunit in the 70S ribosome, contacting the 23S rRNA.

In terms of biological role, one of the primary rRNA binding proteins, it binds directly to 16S rRNA where it helps nucleate assembly of the platform of the 30S subunit by binding and bridging several RNA helices of the 16S rRNA. Functionally, forms an intersubunit bridge (bridge B4) with the 23S rRNA of the 50S subunit in the ribosome. The chain is Small ribosomal subunit protein uS15 from Trichodesmium erythraeum (strain IMS101).